The sequence spans 486 residues: Palmitoyltransferase pfa4 (486 aa).

Residues 1 to 15 (MTNLQTGPTTRGLQR) lie on the Cytoplasmic side of the membrane. The helical transmembrane segment at 16-36 (FAIPAVCGLIIFLGYYSQYLF) threads the bilayer. The Lumenal segment spans residues 37 to 51 (NTSADLAPGPLTCRE). Residues 52–72 (SLIFNILLVCLWLTYYQACTV) traverse the membrane as a helical segment. Residues 73-146 (DPGQYKFPPK…NCVSLQTFPH (74 aa)) lie on the Cytoplasmic side of the membrane. A compositionally biased stretch (basic and acidic residues) spans 81 to 91 (PKEKEDGDNNN). Positions 81 to 101 (PKEKEDGDNNNKRGGRGPQKA) are disordered. A DHHC domain is found at 102–152 (KWCKKCDAPKPPRAHHCRHCARCIPRMDHHCPWTGNCVSLQTFPHFLRFLV). Cysteine 132 serves as the catalytic S-palmitoyl cysteine intermediate. A helical membrane pass occupies residues 147–166 (FLRFLVYTNAALVYFARLLW). Topologically, residues 167-178 (TRLYYGLWDQRH) are lumenal. A helical membrane pass occupies residues 179-201 (VPAYLGPSVGALLGCTMLSIAWF). Topologically, residues 202-486 (ATQFALMVLL…RKVKSNGVHE (285 aa)) are cytoplasmic. Positions 314–420 (NDRVGMWPPP…QDGRAWMNSE (107 aa)) are disordered. 2 stretches are compositionally biased toward basic and acidic residues: residues 324–333 (DPEKLRRERA) and 346–376 (LNTEKPEVDYYRSSEDMKTAFKRRQQEDLRR). The segment covering 386–399 (EEDEIMAELEEDEG) has biased composition (acidic residues).

It belongs to the DHHC palmitoyltransferase family. PFA4 subfamily.

Its subcellular location is the endoplasmic reticulum membrane. It catalyses the reaction L-cysteinyl-[protein] + hexadecanoyl-CoA = S-hexadecanoyl-L-cysteinyl-[protein] + CoA. Its function is as follows. Mediates the reversible addition of palmitate to target proteins, thereby regulating their membrane association and biological function. In Neurospora crassa (strain ATCC 24698 / 74-OR23-1A / CBS 708.71 / DSM 1257 / FGSC 987), this protein is Palmitoyltransferase pfa4.